Here is a 146-residue protein sequence, read N- to C-terminus: Hemoglobin subunit beta-0 (146 aa).

One can recognise a Globin domain in the interval Glu2–His146. The heme b site is built by His63 and His92.

Belongs to the globin family. Heterotetramer of two alpha chains and two beta chains. Red blood cells.

Its function is as follows. Involved in oxygen transport from gills to the various peripheral tissues. This is Hemoglobin subunit beta-0 (hbb0) from Pagothenia borchgrevinki (Bald rockcod).